A 559-amino-acid polypeptide reads, in one-letter code: Dihydroxy-acid dehydratase (559 aa).

Cys49 is a [2Fe-2S] cluster binding site. Residue Asp81 coordinates Mg(2+). Position 122 (Cys122) interacts with [2Fe-2S] cluster. Mg(2+)-binding residues include Asp123 and Lys124. The residue at position 124 (Lys124) is an N6-carboxylysine. Cys194 contributes to the [2Fe-2S] cluster binding site. A Mg(2+)-binding site is contributed by Glu446. Catalysis depends on Ser472, which acts as the Proton acceptor.

It belongs to the IlvD/Edd family. As to quaternary structure, homodimer. It depends on [2Fe-2S] cluster as a cofactor. Mg(2+) is required as a cofactor.

It catalyses the reaction (2R)-2,3-dihydroxy-3-methylbutanoate = 3-methyl-2-oxobutanoate + H2O. The enzyme catalyses (2R,3R)-2,3-dihydroxy-3-methylpentanoate = (S)-3-methyl-2-oxopentanoate + H2O. The protein operates within amino-acid biosynthesis; L-isoleucine biosynthesis; L-isoleucine from 2-oxobutanoate: step 3/4. It participates in amino-acid biosynthesis; L-valine biosynthesis; L-valine from pyruvate: step 3/4. Functionally, functions in the biosynthesis of branched-chain amino acids. Catalyzes the dehydration of (2R,3R)-2,3-dihydroxy-3-methylpentanoate (2,3-dihydroxy-3-methylvalerate) into 2-oxo-3-methylpentanoate (2-oxo-3-methylvalerate) and of (2R)-2,3-dihydroxy-3-methylbutanoate (2,3-dihydroxyisovalerate) into 2-oxo-3-methylbutanoate (2-oxoisovalerate), the penultimate precursor to L-isoleucine and L-valine, respectively. This Prochlorococcus marinus subsp. pastoris (strain CCMP1986 / NIES-2087 / MED4) protein is Dihydroxy-acid dehydratase.